A 190-amino-acid polypeptide reads, in one-letter code: MSSSALTCGSTLEKSGDTWEMKALDSSRLVPWPPRGLGSSTQHPNKPHCALASCQGPGVLPGAASALPELTFQGDVCQSETCQRYLQAAISLDIAVSQINLLGRPSSPPALLIQQGSCEQVIHNSTPQFLGMEDGDNERTTGWLWRLCEDIDAEPSSTGCSRSNQLTFTEGCFVRSLSTVYSNTHIHTHL.

In terms of tissue distribution, expressed in testis.

The chain is Spermatogenesis-associated protein 12 (SPATA12) from Homo sapiens (Human).